A 327-amino-acid polypeptide reads, in one-letter code: MIKIGNIELSSNVILAPMSNITDLEFRKLVKRFGAGLVVSEMIASRAMIMKSRQSMQKCAIMHDDPTSACVQLAGCEPDVIADAAKMNEDMGAKIIDLNFGCPAKKVVGGYAGSALMRDERLATKIFEATVKAVKIPVTVKMRMGWDDNTKNAPTLAVIAASSGVQMVTVHGRTRCQFYSGNANWDFIRVVKEAVKIPVIANGDITNFAKAKEALQKSGADGIMVGRGVYGKPWLISQIAYYLKTGKEKPAPSIAEQLDIIIKHYDAIIDYYGKSVGVPIARKHIIWYSSGLPSSAEFRCAVNLMNDPIAVKEKIAEFYMSVMDANK.

FMN contacts are provided by residues 17–19 (PMS) and Gln72. Residue Cys102 is the Proton donor of the active site. FMN-binding positions include Lys141, 202 to 204 (NGD), and 226 to 227 (GR).

This sequence belongs to the Dus family. The cofactor is FMN.

It catalyses the reaction a 5,6-dihydrouridine in tRNA + NAD(+) = a uridine in tRNA + NADH + H(+). The enzyme catalyses a 5,6-dihydrouridine in tRNA + NADP(+) = a uridine in tRNA + NADPH + H(+). Its function is as follows. Catalyzes the synthesis of 5,6-dihydrouridine (D), a modified base found in the D-loop of most tRNAs, via the reduction of the C5-C6 double bond in target uridines. This is Probable tRNA-dihydrouridine synthase (dus) from Rickettsia typhi (strain ATCC VR-144 / Wilmington).